We begin with the raw amino-acid sequence, 76 residues long: Small proline-rich protein 4 (76 aa).

Residues 38 to 76 (PKTKDPCVPQAKKQCPARSTTNPAQEKCPAQQDPKCKQK) form a disordered region.

It belongs to the cornifin (SPRR) family. Cross-linked to membrane proteins by transglutaminase.

It is found in the cytoplasm. The protein localises to the cell cortex. Functionally, cross-linked envelope protein of keratinocytes. Involved in UV-induced cornification. This Mus musculus (Mouse) protein is Small proline-rich protein 4 (Sprr4).